Consider the following 313-residue polypeptide: Glucan 1,3-beta-glucosidase (313 aa).

The signal sequence occupies residues 1–23 (MRFSTTLATAATALFFTASQVSA). The active-site Proton donor is Glu124. Asn202 carries an N-linked (GlcNAc...) asparagine glycan. The Nucleophile role is filled by Glu233. The N-linked (GlcNAc...) asparagine glycan is linked to Asn284.

This sequence belongs to the glycosyl hydrolase 17 family.

The protein localises to the secreted. It is found in the cell wall. It carries out the reaction Successive hydrolysis of beta-D-glucose units from the non-reducing ends of (1-&gt;3)-beta-D-glucans, releasing alpha-glucose.. Functionally, glucanases possibly play a role in cell expansion during growth, in cell-cell fusion during mating, and in spore release during sporulation. This enzyme may be involved in beta-glucan degradation and also function biosynthetically as a transglycosylase. The protein is Glucan 1,3-beta-glucosidase (BGL2) of Saccharomyces cerevisiae (strain ATCC 204508 / S288c) (Baker's yeast).